Here is a 492-residue protein sequence, read N- to C-terminus: MSPERSQEESPEGDTERTERKPMVKDAFKDISIYFTKEEWAEMGDWEKTRYRNVKMNYNALITVGLRATRPAFMCHRRQAIKLQVDDTEDSDEEWTPRQQVKPPWMAFRGEQSKHQKGMPKASFNNESSLRELSGTPNLLNTSDSEQAQKPVSPPGEASTSGQHSRLKLELRRKETEGKMYSLRERKGHAYKEISEPQDDDYLYCEMCQNFFIDSCAAHGPPTFVKDSAVDKGHPNRSALSLPPGLRIGPSGIPQAGLGVWNEASDLPLGLHFGPYEGRITEDEEAANSGYSWLITKGRNCYEYVDGKDKSSANWMRYVNCARDDEEQNLVAFQYHRQIFYRTCRVIRPGCELLVWSGDEYGQELGIRSSIEPAESLGQAVNCWSGMGMSMARNWASSGAASGRKSSWQGENQSQRSIHVPHAVWPFQVKNFSVNMWNAITPLRTSQDHLQENFSNQRIPAQGIRIRSGNILIHAAVMTKPKVKRSKKGPNS.

Positions 1 to 22 (MSPERSQEESPEGDTERTERKP) are disordered. One can recognise a KRAB-related domain in the interval 23–86 (MVKDAFKDIS…RRQAIKLQVD (64 aa)). The tract at residues 111–179 (EQSKHQKGMP…ELRRKETEGK (69 aa)) is disordered. A compositionally biased stretch (polar residues) spans 135-150 (GTPNLLNTSDSEQAQK). The segment covering 167-179 (LKLELRRKETEGK) has biased composition (basic and acidic residues). In terms of domain architecture, SET spans 244 to 358 (PGLRIGPSGI…PGCELLVWSG (115 aa)).

The protein localises to the nucleus. The protein resides in the chromosome. It catalyses the reaction N(6),N(6)-dimethyl-L-lysyl(4)-[histone H3] + S-adenosyl-L-methionine = N(6),N(6),N(6)-trimethyl-L-lysyl(4)-[histone H3] + S-adenosyl-L-homocysteine + H(+). Functionally, histone methyltransferase that selectively methylates 'Lys-4' of dimethylated histone H3 (H3K4me2) to produce trimethylated 'Lys-4' histone H3 (H3K4me3). May play a role in epigenetic regulation of gene expression by defining an active chromatin state. The chain is Histone-lysine N-methyltransferase PRDM7 from Homo sapiens (Human).